We begin with the raw amino-acid sequence, 969 residues long: RNA polymerase-associated protein RapA (969 aa).

Residues 164-334 (EVGRRHAPRV…FARLRLLDPD (171 aa)) form the Helicase ATP-binding domain. 177 to 184 (DEVGLGKT) lines the ATP pocket. The DEAH box signature appears at 280 to 283 (DEAH). In terms of domain architecture, Helicase C-terminal spans 492–679 (RVNWLIEKIQ…ESAKLNQSLK (188 aa)).

This sequence belongs to the SNF2/RAD54 helicase family. RapA subfamily. In terms of assembly, interacts with the RNAP. Has a higher affinity for the core RNAP than for the holoenzyme. Its ATPase activity is stimulated by binding to RNAP.

Transcription regulator that activates transcription by stimulating RNA polymerase (RNAP) recycling in case of stress conditions such as supercoiled DNA or high salt concentrations. Probably acts by releasing the RNAP, when it is trapped or immobilized on tightly supercoiled DNA. Does not activate transcription on linear DNA. Probably not involved in DNA repair. The polypeptide is RNA polymerase-associated protein RapA (Vibrio atlanticus (strain LGP32) (Vibrio splendidus (strain Mel32))).